Consider the following 385-residue polypeptide: MNHLRAEGPASVLAIGTANPENILIQDEFPDYYFRVTKSEHMTQLKEKFRKICDKSMIRKRNCFLNEEHLKQNPRLVEHEMQTLDARQDMLVVEVPKLGKDACAKAIKEWGQPKSKITHLIFTSASTTDMPGADYHCAKLLGLSPSVKRVMMYQLGCYGGGTVLRIAKDIAENNKGARVLAVCCDMTACLFRGPSDSNLELLVGQAIFGDGAAAVIVGAEPDESVGERPIFELVSTGQTFLPNSEGTIGGHIREAGLMFDLHKDVPMLISNNIEKCLIEAFTPIGISDWNSIFWITHPGGKAILDKVEEKLHLKSDKFVDSRHVLSEHGNMSSSTVLFVMDELRKRSLEEGKSTTGDGFEWGVLFGFGPGLTVERVVLRSVPINY.

Residue C157 is part of the active site.

It belongs to the thiolase-like superfamily. Chalcone/stilbene synthases family. Expressed in leaves and glandular trichomes.

The protein resides in the cytoplasm. Its function is as follows. Polyketide synthase responsible for the biosynthesis of secondary metabolites. This Cannabis sativa (Hemp) protein is Polyketide synthase 2 (PKSG2).